Consider the following 183-residue polypeptide: Protein Dr1 (183 aa).

The 64-residue stretch at 19–82 (TLPRASINKI…INAEHVLEAL (64 aa)) folds into the Histone-fold domain. Residues 92 to 183 (QEAEAVLHDC…DDDDDDDDDY (92 aa)) are repression of TATA-containing promoters. The disordered stretch occupies residues 155–183 (AMVQRPPLADGSVASKPSEDDDDDDDDDY). The span at 173 to 183 (EDDDDDDDDDY) shows a compositional bias: acidic residues.

It belongs to the NC2 beta/DR1 family. In terms of assembly, component of the Ada2a-containing (ATAC) complex composed of at least Ada2a, Atac1, Hcf, Ada3, Gcn5, Mocs2B, Charac-14, Atac3, Atac2, NC2beta and wds. Homodimer. Interacts with NC2-alpha/Drap1 to form the dNC2 complex.

The protein resides in the nucleus. Its function is as follows. Bifunctional basic transcription factor. Activates transcription of DPE (Downstream Promoter Element) containing promoters while repressing transcription of promoters which contain TATA elements. Together with Chrac-14, promotes nucleosome sliding of ATP-dependent nucleosome remodeling complexes. The chain is Protein Dr1 (NC2beta) from Drosophila melanogaster (Fruit fly).